Here is a 104-residue protein sequence, read N- to C-terminus: Holotricin-3 (104 aa).

Residues 1-20 (MNKLIILGLACIIAVASAMP) form the signal peptide. Residues 22-104 (GPGDGHGGGH…HHGGYQTHGY (83 aa)) form a disordered region. A compositionally biased stretch (gly residues) spans 23–97 (PGDGHGGGHG…PGGHGGGHHG (75 aa)). 18 repeat units span residues 27-30 (HGGG), 31-34 (HGGG), 35-38 (HGGG), 39-42 (HGNG), 43-46 (QGGG), 47-50 (HGHG), 51-54 (PGGG), 55-58 (FGGG), 59-62 (HGGG), 63-66 (HGGG), 67-70 (GRGG), 71-74 (GGSG), 75-78 (GGGS), 79-82 (PGHG), 83-86 (AGGG), 87-90 (YPGG), 91-94 (HGGG), and 96-98 (HGG). The tract at residues 27–98 (HGGGHGGGHG…GGHGGGHHGG (72 aa)) is 18 X 4 AA approximate tandem repeats of H-G-G-G.

It to T.molitor tenecin 3.

It is found in the secreted. In terms of biological role, has antifungal activity against C.albicans. The chain is Holotricin-3 from Holotrichia diomphalia (Korean black chafer).